Consider the following 227-residue polypeptide: UPF0173 metal-dependent hydrolase BCQ_4418 (227 aa).

This sequence belongs to the UPF0173 family.

This Bacillus cereus (strain Q1) protein is UPF0173 metal-dependent hydrolase BCQ_4418.